Here is a 385-residue protein sequence, read N- to C-terminus: Iron uptake system component EfeM (385 aa).

Residues 1–22 (MNFTKIAVSAGCILALCAGCGA) form the signal peptide.

Belongs to the EfeM/EfeO family. Component of the iron transporter efeUOB/M complex composed of EfeU, EfeM and EfeB; EfeU is essential for the complex formation.

The protein localises to the cell membrane. It localises to the membrane raft. In terms of biological role, part of the iron transporter system efeUOB/M involved in iron import. Specifically binds Fe(3+), which is produced by EfeB-mediated oxidation of Fe(2+), and delivers it to the cell membrane permease EfeU. In Bacillus subtilis (strain 168), this protein is Iron uptake system component EfeM.